We begin with the raw amino-acid sequence, 622 residues long: Polypeptide N-acetylgalactosaminyltransferase 18 (622 aa).

Topologically, residues 1–12 (MVCTRKTKTLVS) are cytoplasmic. Residues 13–35 (TCVILSGMTNIICLLYVGWVTNY) form a helical; Signal-anchor for type II membrane protein membrane-spanning segment. Residues 36–622 (IASVYVRGQE…ITNVLRSLVS (587 aa)) lie on the Lumenal side of the membrane. 5 disulfides stabilise this stretch: C144-C392, C383-C462, C497-C513, C545-C558, and C586-C606. Residue N146 is glycosylated (N-linked (GlcNAc...) asparagine). The tract at residues 153–267 (LPEVSIVFIF…VGWAEPVLTR (115 aa)) is catalytic subdomain A. Residue D194 coordinates substrate. Residue N195 is glycosylated (N-linked (GlcNAc...) asparagine). Residues D251 and H253 each contribute to the Mn(2+) site. N-linked (GlcNAc...) asparagine glycosylation is present at N320. A catalytic subdomain B region spans residues 324-400 (PIRSPALIGC…PCSRIAHIER (77 aa)). A Mn(2+)-binding site is contributed by H397. Substrate-binding residues include R400 and Y405. Residues 484–614 (AYGVLQNSLK…KCSGQHWTIT (131 aa)) enclose the Ricin B-type lectin domain.

It belongs to the glycosyltransferase 2 family. GalNAc-T subfamily. It depends on Mn(2+) as a cofactor.

Its subcellular location is the golgi apparatus membrane. It carries out the reaction L-seryl-[protein] + UDP-N-acetyl-alpha-D-galactosamine = a 3-O-[N-acetyl-alpha-D-galactosaminyl]-L-seryl-[protein] + UDP + H(+). The catalysed reaction is L-threonyl-[protein] + UDP-N-acetyl-alpha-D-galactosamine = a 3-O-[N-acetyl-alpha-D-galactosaminyl]-L-threonyl-[protein] + UDP + H(+). The protein operates within protein modification; protein glycosylation. Its function is as follows. Catalyzes the initial reaction in O-linked oligosaccharide biosynthesis, the transfer of an N-acetyl-D-galactosamine (GalNAc) residue from UDP-GalNAc to a serine or threonine residue on the protein receptor. The sequence is that of Polypeptide N-acetylgalactosaminyltransferase 18 (Galnt18) from Mus musculus (Mouse).